A 210-amino-acid polypeptide reads, in one-letter code: Cyclin-U1-1 (210 aa).

Belongs to the cyclin family. Cyclin U/P subfamily. As to quaternary structure, interacts with CDKA-1. Expressed in roots and flowers. Expressed in the shoot apex, leaf primordia and young leaves.

The chain is Cyclin-U1-1 (CYCU1-1) from Arabidopsis thaliana (Mouse-ear cress).